Here is a 96-residue protein sequence, read N- to C-terminus: Beta-defensin 20 (96 aa).

The first 21 residues, 1–21 (MKLLQVLLVLLFVALADGAQP), serve as a signal peptide directing secretion. 3 cysteine pairs are disulfide-bonded: cysteine 24–cysteine 52, cysteine 32–cysteine 46, and cysteine 36–cysteine 53.

It belongs to the beta-defensin family.

It is found in the secreted. In terms of biological role, has antibacterial activity. The sequence is that of Beta-defensin 20 (Defb20) from Mus musculus (Mouse).